Reading from the N-terminus, the 118-residue chain is Small ribosomal subunit protein bS6 (118 aa).

Belongs to the bacterial ribosomal protein bS6 family.

In terms of biological role, binds together with bS18 to 16S ribosomal RNA. The sequence is that of Small ribosomal subunit protein bS6 from Saccharopolyspora erythraea (strain ATCC 11635 / DSM 40517 / JCM 4748 / NBRC 13426 / NCIMB 8594 / NRRL 2338).